The following is a 264-amino-acid chain: Ubiquinone biosynthesis protein COQ4 homolog, mitochondrial (264 aa).

A mitochondrion-targeting transit peptide spans 1 to 26 (MMQRCWQISLPLARRRLIPSLTSKRT). Zn(2+) is bound by residues histidine 169, aspartate 170, histidine 173, and glutamate 185.

The protein belongs to the COQ4 family. Component of a multi-subunit COQ enzyme complex. Zn(2+) is required as a cofactor.

The protein localises to the mitochondrion inner membrane. It catalyses the reaction a 4-hydroxy-3-methoxy-5-(all-trans-polyprenyl)benzoate + H(+) = a 2-methoxy-6-(all-trans-polyprenyl)phenol + CO2. Its pathway is cofactor biosynthesis; ubiquinone biosynthesis. Its function is as follows. Lyase that catalyzes the C1-decarboxylation of 4-hydroxy-3-methoxy-5-(all-trans-polyprenyl)benzoic acid into 2-methoxy-6-(all-trans-polyprenyl)phenol during ubiquinone biosynthesis. This chain is Ubiquinone biosynthesis protein COQ4 homolog, mitochondrial, found in Drosophila grimshawi (Hawaiian fruit fly).